The primary structure comprises 481 residues: Ribulose bisphosphate carboxylase large chain (481 aa).

Positions 1–2 (MS) are excised as a propeptide. Pro-3 bears the N-acetylproline mark. Lys-14 carries the N6,N6,N6-trimethyllysine modification. Substrate is bound by residues Asn-123 and Thr-173. The Proton acceptor role is filled by Lys-175. Residue Lys-177 coordinates substrate. Lys-201, Asp-203, and Glu-204 together coordinate Mg(2+). Lys-201 is subject to N6-carboxylysine. The active-site Proton acceptor is His-294. The substrate site is built by Arg-295, His-327, and Ser-379.

This sequence belongs to the RuBisCO large chain family. Type I subfamily. In terms of assembly, heterohexadecamer of 8 large chains and 8 small chains; disulfide-linked. The disulfide link is formed within the large subunit homodimers. Mg(2+) serves as cofactor. The disulfide bond which can form in the large chain dimeric partners within the hexadecamer appears to be associated with oxidative stress and protein turnover.

The protein resides in the plastid. It catalyses the reaction 2 (2R)-3-phosphoglycerate + 2 H(+) = D-ribulose 1,5-bisphosphate + CO2 + H2O. The catalysed reaction is D-ribulose 1,5-bisphosphate + O2 = 2-phosphoglycolate + (2R)-3-phosphoglycerate + 2 H(+). In terms of biological role, ruBisCO catalyzes two reactions: the carboxylation of D-ribulose 1,5-bisphosphate, the primary event in carbon dioxide fixation, as well as the oxidative fragmentation of the pentose substrate in the photorespiration process. Both reactions occur simultaneously and in competition at the same active site. This is Ribulose bisphosphate carboxylase large chain from Cuscuta obtusiflora (Peruvian dodder).